The following is a 331-amino-acid chain: DNA double-strand break repair nuclease NurA (331 aa).

Positions 56 and 131 each coordinate Mn(2+).

It belongs to the NurA family. In terms of assembly, homodimer. Interacts with SSB. The cofactor is Mn(2+).

The 5'-3' ssDNA and dsDNA exonuclease and ssDNA endonuclease activities are inhibited by SSB (single-stranded DNA-binding protein). Its function is as follows. Involved in DNA double-strand break (DSB) repair. Probably acts with HerA to stimulate resection of the 5' strand and produce the long 3' single-strand that is required for RadA loading. Exhibits both single-stranded endonuclease activity and 5'-3' exonuclease activity on single-stranded and double-stranded DNA. In Sulfurisphaera tokodaii (strain DSM 16993 / JCM 10545 / NBRC 100140 / 7) (Sulfolobus tokodaii), this protein is DNA double-strand break repair nuclease NurA.